A 252-amino-acid chain; its full sequence is 3-deoxy-manno-octulosonate cytidylyltransferase (252 aa).

This sequence belongs to the KdsB family.

Its subcellular location is the cytoplasm. It carries out the reaction 3-deoxy-alpha-D-manno-oct-2-ulosonate + CTP = CMP-3-deoxy-beta-D-manno-octulosonate + diphosphate. It participates in nucleotide-sugar biosynthesis; CMP-3-deoxy-D-manno-octulosonate biosynthesis; CMP-3-deoxy-D-manno-octulosonate from 3-deoxy-D-manno-octulosonate and CTP: step 1/1. The protein operates within bacterial outer membrane biogenesis; lipopolysaccharide biosynthesis. In terms of biological role, activates KDO (a required 8-carbon sugar) for incorporation into bacterial lipopolysaccharide in Gram-negative bacteria. The sequence is that of 3-deoxy-manno-octulosonate cytidylyltransferase from Nitratidesulfovibrio vulgaris (strain DP4) (Desulfovibrio vulgaris).